The primary structure comprises 66 residues: Large ribosomal subunit protein bL33c (66 aa).

It belongs to the bacterial ribosomal protein bL33 family.

Its subcellular location is the plastid. The protein localises to the chloroplast. In Calycanthus floridus var. glaucus (Eastern sweetshrub), this protein is Large ribosomal subunit protein bL33c.